We begin with the raw amino-acid sequence, 343 residues long: N-acetyl-gamma-glutamyl-phosphate reductase (343 aa).

Cysteine 149 is an active-site residue.

It belongs to the NAGSA dehydrogenase family. Type 1 subfamily.

The protein resides in the cytoplasm. The enzyme catalyses N-acetyl-L-glutamate 5-semialdehyde + phosphate + NADP(+) = N-acetyl-L-glutamyl 5-phosphate + NADPH + H(+). Its pathway is amino-acid biosynthesis; L-arginine biosynthesis; N(2)-acetyl-L-ornithine from L-glutamate: step 3/4. Functionally, catalyzes the NADPH-dependent reduction of N-acetyl-5-glutamyl phosphate to yield N-acetyl-L-glutamate 5-semialdehyde. In Methanococcus maripaludis (strain C6 / ATCC BAA-1332), this protein is N-acetyl-gamma-glutamyl-phosphate reductase.